The following is a 124-amino-acid chain: MTTINQLVRKPRVSKKEKSNVPALEGCPQRRGVCTRVYTTTPKKPNSALRKVARVRLTNGAEVTSYIGGEGHNLQEHSVILIRGGRVKDLPGVRYHVVRGSLDTAGVQKRRQGRSKYGAKRPKS.

Asp89 carries the 3-methylthioaspartic acid modification. Residues 103–124 (DTAGVQKRRQGRSKYGAKRPKS) are disordered. Residues 108 to 124 (QKRRQGRSKYGAKRPKS) show a composition bias toward basic residues.

It belongs to the universal ribosomal protein uS12 family. In terms of assembly, part of the 30S ribosomal subunit. Contacts proteins S8 and S17. May interact with IF1 in the 30S initiation complex.

In terms of biological role, with S4 and S5 plays an important role in translational accuracy. Its function is as follows. Interacts with and stabilizes bases of the 16S rRNA that are involved in tRNA selection in the A site and with the mRNA backbone. Located at the interface of the 30S and 50S subunits, it traverses the body of the 30S subunit contacting proteins on the other side and probably holding the rRNA structure together. The combined cluster of proteins S8, S12 and S17 appears to hold together the shoulder and platform of the 30S subunit. This is Small ribosomal subunit protein uS12 from Methylococcus capsulatus (strain ATCC 33009 / NCIMB 11132 / Bath).